The primary structure comprises 435 residues: MLDSKLLRTELDETAEKLARRGFKLDVETLRNLEEQRKSLQVKTEELQAQRNSRSKSIGQAKAKGDHEEADRIMADVANLGSELDEAKAALAELQQQIEDIALSVPNIPDDSVPLGKDENENVEVLRWGTPLAYDFEVKDHVDLGEMADGLDFASAVKISGSRFIVMKGQFARLHRALSQFMLDLHTEEHGYTEMYVPYLVNPDSLFGTGQLPKFGEDLFHTSPLTEQVSDVPLKKLSLIPTAEVPVTNMVRDTITDEADMPLKMTAHTPCFRSEAGSYGRDTRGLIRMHQFDKVELVQITRPEDSMAALEELTGHAEKVLQLLELPYRKVVLCTGDMGFGSRKTYDLEVWVPAQETYREISSCSNMWDFQARRMQARFRRKGEKKPELVHTLNGSGLAVGRTMVAILENFQQADGKIAIPQVLRKYMNGVEFIG.

Positions 41-70 are disordered; sequence QVKTEELQAQRNSRSKSIGQAKAKGDHEEA. The span at 49 to 58 shows a compositional bias: polar residues; sequence AQRNSRSKSI. Residue 242 to 244 participates in L-serine binding; sequence TAE. 273 to 275 is a binding site for ATP; the sequence is RSE. L-serine is bound at residue Glu296. ATP is bound at residue 360–363; sequence EISS. Residue Ser396 coordinates L-serine.

The protein belongs to the class-II aminoacyl-tRNA synthetase family. Type-1 seryl-tRNA synthetase subfamily. In terms of assembly, homodimer. The tRNA molecule binds across the dimer.

It localises to the cytoplasm. The catalysed reaction is tRNA(Ser) + L-serine + ATP = L-seryl-tRNA(Ser) + AMP + diphosphate + H(+). It carries out the reaction tRNA(Sec) + L-serine + ATP = L-seryl-tRNA(Sec) + AMP + diphosphate + H(+). It functions in the pathway aminoacyl-tRNA biosynthesis; selenocysteinyl-tRNA(Sec) biosynthesis; L-seryl-tRNA(Sec) from L-serine and tRNA(Sec): step 1/1. Catalyzes the attachment of serine to tRNA(Ser). Is also able to aminoacylate tRNA(Sec) with serine, to form the misacylated tRNA L-seryl-tRNA(Sec), which will be further converted into selenocysteinyl-tRNA(Sec). The chain is Serine--tRNA ligase from Aliivibrio fischeri (strain MJ11) (Vibrio fischeri).